Reading from the N-terminus, the 1377-residue chain is DNA-directed RNA polymerase subunit beta' (1377 aa).

Positions 60, 62, 75, and 78 each coordinate Zn(2+). Residues aspartate 449, aspartate 451, and aspartate 453 each contribute to the Mg(2+) site. Zn(2+) contacts are provided by cysteine 777, cysteine 851, cysteine 858, and cysteine 861.

It belongs to the RNA polymerase beta' chain family. The RNAP catalytic core consists of 2 alpha, 1 beta, 1 beta' and 1 omega subunit. When a sigma factor is associated with the core the holoenzyme is formed, which can initiate transcription. Mg(2+) is required as a cofactor. It depends on Zn(2+) as a cofactor.

It catalyses the reaction RNA(n) + a ribonucleoside 5'-triphosphate = RNA(n+1) + diphosphate. DNA-dependent RNA polymerase catalyzes the transcription of DNA into RNA using the four ribonucleoside triphosphates as substrates. This Borreliella burgdorferi (strain ZS7) (Borrelia burgdorferi) protein is DNA-directed RNA polymerase subunit beta'.